Reading from the N-terminus, the 139-residue chain is MSSELFDPKPLVEIKEAYRKNKKFIRHHSDRYKRVKPSWRRPHGIDSKVRKRCKGEREMPSIKYKKPKEIRHLLPNGLRKVRIFNINDLTPLTSLNRFYCGEIAHAVGARKRIAIVNRAKELGICLLNGNARLIPEIEE.

The protein belongs to the eukaryotic ribosomal protein eL32 family.

The protein is Large ribosomal subunit protein eL32 (RPL32) of Encephalitozoon cuniculi (strain GB-M1) (Microsporidian parasite).